A 115-amino-acid polypeptide reads, in one-letter code: U3-lycotoxin-Ls1s (115 aa).

The signal sequence occupies residues 1 to 20 (MKFVLLFGVFLLTLFSYSSS). A propeptide spanning residues 21-44 (EMLDDFDQADEDELLSLIEKEEAR) is cleaved from the precursor. Intrachain disulfides connect C48–C63, C55–C72, C62–C87, and C74–C85.

Belongs to the neurotoxin 19 (CSTX) family. 01 subfamily. As to expression, expressed by the venom gland.

It localises to the secreted. The protein is U3-lycotoxin-Ls1s of Lycosa singoriensis (Wolf spider).